Here is a 492-residue protein sequence, read N- to C-terminus: Probable folate-biopterin transporter 5 (492 aa).

Transmembrane regions (helical) follow at residues Val46–Val66, Ile92–Gly112, Pro117–Ser137, Tyr142–Ile162, Leu186–Val206, Gly210–Ser230, Leu264–Thr285, Val298–Leu318, Leu328–Leu348, Phe361–Phe381, Phe396–Gly416, and Trp433–Val453.

It belongs to the major facilitator superfamily. Folate-biopterin transporter (TC 2.A.71) family.

It is found in the membrane. Functionally, could mediate folate transport. The protein is Probable folate-biopterin transporter 5 of Arabidopsis thaliana (Mouse-ear cress).